We begin with the raw amino-acid sequence, 453 residues long: Cholesterol 7-desaturase nvd (453 aa).

Residues 53–73 (IVEYILILTLMFAFSAILYVI) traverse the membrane as a helical segment. In terms of domain architecture, Rieske spans 126-229 (WFAVAETREL…VVETDGAIWI (104 aa)). [2Fe-2S] cluster-binding residues include C167, H169, C187, and H190.

Belongs to the cholesterol 7-desaturase family. [2Fe-2S] cluster is required as a cofactor.

Its subcellular location is the membrane. The enzyme catalyses cholesterol + NADPH + O2 + H(+) = 7-dehydrocholesterol + NADP(+) + 2 H2O. It catalyses the reaction cholesterol + NADH + O2 + H(+) = 7-dehydrocholesterol + NAD(+) + 2 H2O. The protein operates within steroid hormone biosynthesis; dafachronic acid biosynthesis. In terms of biological role, catalyzes the production of 7-dehydrocholesterol (7-DHC or cholesta-5,7-dien-3beta-ol) by inserting a double bond (desaturating) at the C7-C8 single bond of cholesterol. Essential regulator of steroid biosynthesis as this reaction is the first step in the synthesis of the steroid hormone Delta(7)-dafachronic acid. The protein is Cholesterol 7-desaturase nvd of Bombyx mori (Silk moth).